Consider the following 972-residue polypeptide: SWI/SNF-related matrix-associated actin-dependent regulator of chromatin subfamily A containing DEAD/H box 1A (972 aa).

3 disordered regions span residues 15–76, 125–177, and 217–333; these read NAVG…SDLQ, DEDS…EKQE, and SSTD…EDSI. Composition is skewed to basic and acidic residues over residues 22–42 and 63–72; these read KSPDGSNSDKENKQAHQRKAD and EVVRMGKDSA. A CUE 1 domain is found at 82–127; the sequence is DMEDKIIKLLEIFPQKSKKDLLEVIENTSTLDGAVAHCLMIYGDED. A compositionally biased stretch (basic and acidic residues) spans 128–138; the sequence is SGGRKDKGGRS. Positions 156–169 are enriched in acidic residues; sequence SESEDEDSEDEESE. The CUE 2 domain maps to 175-218; it reads KQEALLKKLKRKLPDIEKEVLRDILKEHDWDYENALGSLLVFSS. Residues 237–246 show a composition bias toward basic and acidic residues; that stretch reads HSKEKTDKIT. Residues 247 to 263 show a composition bias toward polar residues; sequence QRPSGSSSLSRWLTAAS. The span at 279-290 shows a compositional bias: low complexity; the sequence is KSALSKSTSKNS. Positions 307-332 are enriched in acidic residues; sequence ASEDEDEIDSDVDSMSDDQDSEDEDS. The Helicase ATP-binding domain maps to 460–628; it reads ILLHQHKLSG…MSLLNFIMPS (169 aa). 473-480 is a binding site for ATP; that stretch reads DEMGLGKT. The DEGH box motif lies at 579–582; sequence DEGH. Residues 805 to 966 enclose the Helicase C-terminal domain; it reads LLTKTLAKLK…AITEQMAELL (162 aa).

Belongs to the SNF2/RAD54 helicase family.

It is found in the nucleus. Its subcellular location is the chromosome. The enzyme catalyses ATP + H2O = ADP + phosphate + H(+). Functionally, DNA helicase that possesses intrinsic ATP-dependent nucleosome-remodeling activity and is both required for DNA repair and heterochromatin organization. Promotes DNA end resection of double-strand breaks (DSBs) following DNA damage: probably acts by weakening histone DNA interactions in nucleosomes flanking DSBs. Required for the restoration of heterochromatin organization after replication. The chain is SWI/SNF-related matrix-associated actin-dependent regulator of chromatin subfamily A containing DEAD/H box 1A (smarcad1a) from Danio rerio (Zebrafish).